The chain runs to 442 residues: MNIFDHQIKNVDKGNVVAILGAQWGDEGKGKIIDMLSEYSDITCRFNGGANAGHTISVNDKKYALHLLPCGVLYDNNISVLGNGMVIHVKSLMEEIESVGGKLLDRLYLSNKAHILFDIHQIIDSIQETKKLKEGKQIGTTKRGIGPCYSTKASRIGIRLGTLKNFENFKNMYSKLIDHLMDLYNITEYDKEKELNLFYNYHLKLRDRIVDVISFMNTNLENNKKVLIEGANAAMLDIDFGTYPYVTSSCTTVGGVFSGLGIHHKKLNLVVGVVKSYLTRVGCGPFLTELNNDVGQYLREKGHEYGTTTKRPRRCGWLDIPMLLYVKCINSIDMINLTKLDVLSGLEEILLCVNFKNKKTGELLEKGCYPVEEEISEEYEPVYEKFSGWKEDISTCNEFDELPENAKKYILAIEKYLKTPIVWIGVGPNRKNMIVKKNFNLN.

GTP contacts are provided by residues 25-31, 53-55, and lysine 62; these read GDEGKGK and GHT. The Proton acceptor role is filled by aspartate 26. Mg(2+) contacts are provided by aspartate 26 and glycine 53. IMP contacts are provided by residues 26 to 29 and 51 to 54; these read DEGK and NAGH. The Proton donor role is filled by histidine 54. IMP-binding residues include threonine 141, arginine 155, asparagine 232, and threonine 247. Threonine 307 contacts GTP. 307–313 provides a ligand contact to substrate; sequence TTTKRPR. Residue arginine 311 participates in IMP binding. Residues arginine 313, 339 to 341, and 425 to 427 contribute to the GTP site; these read KLD and GVG.

Belongs to the adenylosuccinate synthetase family. Homodimer. Mg(2+) serves as cofactor.

The protein resides in the cytoplasm. It carries out the reaction IMP + L-aspartate + GTP = N(6)-(1,2-dicarboxyethyl)-AMP + GDP + phosphate + 2 H(+). It functions in the pathway purine metabolism; AMP biosynthesis via de novo pathway; AMP from IMP: step 1/2. Functionally, plays an important role in the salvage pathway for purine nucleotide biosynthesis. Catalyzes the first committed step in the biosynthesis of AMP from IMP. The sequence is that of Adenylosuccinate synthetase (Adss) from Plasmodium falciparum (isolate 3D7).